A 505-amino-acid polypeptide reads, in one-letter code: Tyrosine-protein kinase FRK (505 aa).

S37 and S40 each carry phosphoserine. One can recognise an SH3 domain in the interval 42 to 110 (RHGHYFVALF…PSNYVAEDRS (69 aa)). The SH2 domain occupies 116–208 (WFFGAIGRSD…GLCVKLGKPC (93 aa)). At T178 the chain carries Phosphothreonine. The Protein kinase domain maps to 234–491 (IQLLKRLGSG…TLRWKLEDYF (258 aa)). ATP is bound by residues 240–248 (LGSGQFGEV) and K262. The active-site Proton acceptor is D354. At Y387 the chain carries Phosphotyrosine; by autocatalysis.

The protein belongs to the protein kinase superfamily. Tyr protein kinase family. SRC subfamily. Interacts (via the SH3-domain) with PTEN. Interacts with RB1. As to expression, predominantly expressed in epithelial derived cell lines and tissues, especially normal liver, kidney, breast and colon.

Its subcellular location is the cytoplasm. The protein resides in the nucleus. It carries out the reaction L-tyrosyl-[protein] + ATP = O-phospho-L-tyrosyl-[protein] + ADP + H(+). Functionally, non-receptor tyrosine-protein kinase that negatively regulates cell proliferation. Positively regulates PTEN protein stability through phosphorylation of PTEN on 'Tyr-336', which in turn prevents its ubiquitination and degradation, possibly by reducing its binding to NEDD4. May function as a tumor suppressor. This Homo sapiens (Human) protein is Tyrosine-protein kinase FRK (FRK).